Consider the following 110-residue polypeptide: Phosphoribosyl-ATP pyrophosphatase (110 aa).

It belongs to the PRA-PH family.

Its subcellular location is the cytoplasm. The catalysed reaction is 1-(5-phospho-beta-D-ribosyl)-ATP + H2O = 1-(5-phospho-beta-D-ribosyl)-5'-AMP + diphosphate + H(+). The protein operates within amino-acid biosynthesis; L-histidine biosynthesis; L-histidine from 5-phospho-alpha-D-ribose 1-diphosphate: step 2/9. This Clostridium novyi (strain NT) protein is Phosphoribosyl-ATP pyrophosphatase.